A 210-amino-acid chain; its full sequence is Glutathione S-transferase P (210 aa).

The 80-residue stretch at 2 to 81 (PPYTIVYFPV…HLGRSLGLYG (80 aa)) folds into the GST N-terminal domain. The residue at position 4 (Tyr4) is a Phosphotyrosine; by EGFR. Glutathione-binding positions include Tyr8, Arg14, Trp39, Lys45, and 52–53 (QL). Thr62 is subject to Phosphothreonine. Residue 65 to 66 (QS) coordinates glutathione. The 122-residue stretch at 83–204 (DQKEAALVDM…SSPDHLNRPI (122 aa)) folds into the GST C-terminal domain. 2 positions are modified to N6-succinyllysine: Lys103 and Lys116. Lys128 bears the N6-acetyllysine mark.

Belongs to the GST superfamily. Pi family. In terms of assembly, homodimer. Interacts with CDK5. Present in kidney, lung, testis and placenta, very low levels in liver.

Its subcellular location is the cytoplasm. The protein localises to the mitochondrion. It localises to the nucleus. The enzyme catalyses RX + glutathione = an S-substituted glutathione + a halide anion + H(+). It catalyses the reaction prostaglandin J2 + glutathione = prostaglandin J2-S-(R)-glutathione. It carries out the reaction prostaglandin J2 + glutathione = prostaglandin J2-S-(S)-glutathione. The catalysed reaction is prostaglandin A2 + glutathione = prostaglandin A2-S-(S)-glutathione. The enzyme catalyses 11(S)-hydroxy-14(S),15(S)-epoxy-(5Z,8Z,12E)-eicosatrienoate + glutathione = (11S,15S)-dihydroxy-14(R)-S-glutathionyl-(5Z,8Z,12E)-eicosatrienoate. Functionally, conjugation of reduced glutathione to a wide number of exogenous and endogenous hydrophobic electrophiles. Involved in the formation of glutathione conjugates of both prostaglandin A2 (PGA2) and prostaglandin J2 (PGJ2). Participates in the formation of novel hepoxilin regioisomers. Negatively regulates CDK5 activity via p25/p35 translocation to prevent neurodegeneration. The sequence is that of Glutathione S-transferase P from Rattus norvegicus (Rat).